Here is a 309-residue protein sequence, read N- to C-terminus: p-hydroxybenzoic acid efflux pump subunit AaeA (309 aa).

A helical transmembrane segment spans residues 12 to 32 (AITVVLVILAFIAIFNAWVYY).

The protein belongs to the membrane fusion protein (MFP) (TC 8.A.1) family.

The protein resides in the cell inner membrane. In terms of biological role, forms an efflux pump with AaeB. This chain is p-hydroxybenzoic acid efflux pump subunit AaeA, found in Escherichia coli O157:H7.